The primary structure comprises 311 residues: Transcription initiation factor IIB (311 aa).

A TFIIB-type zinc finger spans residues 11 to 42 (KETKCPECGSTKLINDHERGEVVCGACGLVID). C15, C18, C34, and C37 together coordinate Zn(2+). 2 tandem repeats follow at residues 128–211 (SELD…TREL) and 222–303 (DYVP…ELTE).

It belongs to the TFIIB family.

Stabilizes TBP binding to an archaeal box-A promoter. Also responsible for recruiting RNA polymerase II to the pre-initiation complex (DNA-TBP-TFIIB). This is Transcription initiation factor IIB from Methanosphaera stadtmanae (strain ATCC 43021 / DSM 3091 / JCM 11832 / MCB-3).